Here is a 60-residue protein sequence, read N- to C-terminus: Mastoparan-VB1 (60 aa).

The N-terminal stretch at 1–23 (MKNTILLLFTAFIFLSGFFGMSA) is a signal peptide. A propeptide spanning residues 24-45 (EALADPKADPLAGPFPDADPDP) is cleaved from the precursor. AXPX repeat units follow at residues 27–30 (ADPK), 31–34 (ADPL), 35–38 (AGPF), and 40–43 (DADP). At leucine 59 the chain carries Leucine amide.

Expressed by the venom gland.

The protein localises to the secreted. Its subcellular location is the target cell membrane. Antimicrobial peptide. Shows activity against both Gram-positive (S.aureus MIC=1.9-3.75 ug/ml) and -negative (E.coli MIC=15-60 ug/ml) bacteria, as well against fungi (C.albicans MIC=15 ug/ml). Also promotes moderate mast cell degranulation. Does not show hemolytic activity on rabbit and human erythrocytes. Its mast cell degranulation activity may be related to the activation of G-protein coupled receptors in mast cells as well as interaction with other proteins located in cell endosomal membranes in the mast cells. This chain is Mastoparan-VB1, found in Vespa bicolor (Black shield wasp).